The following is an 88-amino-acid chain: Phosphocarrier protein HPr (88 aa).

Residues 1–88 enclose the HPr domain; the sequence is MEQQSYTIID…DVLSKEGLTE (88 aa). Residue H15 is the Pros-phosphohistidine intermediate of the active site. S46 bears the Phosphoserine; by HPrK/P mark.

The protein belongs to the HPr family.

The protein resides in the cytoplasm. Phosphorylation on Ser-46 inhibits the phosphoryl transfer from enzyme I to HPr. Its function is as follows. General (non sugar-specific) component of the phosphoenolpyruvate-dependent sugar phosphotransferase system (sugar PTS). This major carbohydrate active-transport system catalyzes the phosphorylation of incoming sugar substrates concomitantly with their translocation across the cell membrane. The phosphoryl group from phosphoenolpyruvate (PEP) is transferred to the phosphoryl carrier protein HPr by enzyme I. Phospho-HPr then transfers it to the PTS EIIA domain. Functionally, P-Ser-HPr interacts with the catabolite control protein A (CcpA), forming a complex that binds to DNA at the catabolite response elements cre, operator sites preceding a large number of catabolite-regulated genes. Thus, P-Ser-HPr is a corepressor in carbon catabolite repression (CCR), a mechanism that allows bacteria to coordinate and optimize the utilization of available carbon sources. P-Ser-HPr also plays a role in inducer exclusion, in which it probably interacts with several non-PTS permeases and inhibits their transport activity. The chain is Phosphocarrier protein HPr (ptsH) from Staphylococcus carnosus.